Here is a 122-residue protein sequence, read N- to C-terminus: UPF0145 protein BamMC406_5002 (122 aa).

It belongs to the UPF0145 family.

This Burkholderia ambifaria (strain MC40-6) protein is UPF0145 protein BamMC406_5002.